The primary structure comprises 329 residues: PTS-dependent dihydroxyacetone kinase 1, dihydroxyacetone-binding subunit DhaK (329 aa).

Positions 7–329 (GTDQVVEQMV…LKLPVDTIAW (323 aa)) constitute a DhaK domain. Dihydroxyacetone is bound by residues 53 to 56 (GSGH), Lys-104, and Asp-109. His-56 acts as the Proton acceptor in catalysis. His-218 functions as the Tele-hemiaminal-histidine intermediate in the catalytic mechanism.

As to quaternary structure, homodimer. The dihydroxyacetone kinase complex is composed of a homodimer of DhaM, a homodimer of DhaK and the subunit DhaL.

The protein localises to the cytoplasm. The catalysed reaction is dihydroxyacetone + phosphoenolpyruvate = dihydroxyacetone phosphate + pyruvate. The protein operates within polyol metabolism; glycerol degradation. Functionally, dihydroxyacetone binding subunit of the dihydroxyacetone kinase, which is responsible for the phosphoenolpyruvate (PEP)-dependent phosphorylation of dihydroxyacetone via a phosphoryl group transfer from DhaL-ATP. In Listeria innocua serovar 6a (strain ATCC BAA-680 / CLIP 11262), this protein is PTS-dependent dihydroxyacetone kinase 1, dihydroxyacetone-binding subunit DhaK.